We begin with the raw amino-acid sequence, 727 residues long: Pre-B-cell leukemia transcription factor-interacting protein 1 (727 aa).

Residues 1 to 10 (MASCPDSDNS) show a composition bias toward polar residues. Residues 1–135 (MASCPDSDNS…SPHRSLPSSP (135 aa)) form a disordered region. A compositionally biased stretch (low complexity) spans 39–53 (RAPQSPSRAAAEESA). Ser-43 bears the Phosphoserine mark. A compositionally biased stretch (polar residues) spans 61-70 (TVSQNESSKS). Residues Ser-130, Ser-134, Ser-147, Ser-148, and Ser-149 each carry the phosphoserine modification. Thr-153 bears the Phosphothreonine mark. Coiled coils occupy residues 269–353 (QNMA…QGAD) and 380–421 (SPGF…SLKE). The short motif at 488–506 (WKTEHWKHKKEASGREKSW) is the Nuclear localization signal element. Disordered regions lie at residues 491-568 (EHWK…AKDR) and 701-727 (KRSG…HRQG). Composition is skewed to basic and acidic residues over residues 498 to 544 (EASG…EPPR), 551 to 568 (PSGE…AKDR), and 716 to 727 (GPREEHSPHRQG). The Nuclear localization signal motif lies at 696-719 (DKALKKRSGKKDKHLQNRVVGPRE).

As to quaternary structure, interacts with ESR1, PBX1, PBX2 and PBX3. Interacts with TEX11.

Its subcellular location is the cytoplasm. The protein resides in the cytoskeleton. It localises to the nucleus. Functionally, regulator of pre-B-cell leukemia transcription factors (BPXs) function. Inhibits the binding of PBX1-HOX complex to DNA and blocks the transcriptional activity of E2A-PBX1. Tethers estrogen receptor-alpha (ESR1) to microtubules and allows them to influence estrogen receptors-alpha signaling. This Bos taurus (Bovine) protein is Pre-B-cell leukemia transcription factor-interacting protein 1 (PBXIP1).